The chain runs to 719 residues: Putative RNA-binding protein involved in heterochromatin assembly (719 aa).

An RRM domain is found at 226 to 322 (KILYMNNLPP…NLANTKQPRV (97 aa)). Phosphoserine is present on Ser345. The RanBP2-type 1 zinc finger occupies 355–384 (RPGDWNCPSCGFSNFQRRTACFRCSFPAPS). The disordered stretch occupies residues 389 to 415 (HTANSNNNVNSSRNNLNNRVNSGSSSN). Residues 392–415 (NSNNNVNSSRNNLNNRVNSGSSSN) are compositionally biased toward low complexity. Ser455 carries the phosphoserine modification. The interval 511–561 (NNNINGNGNGNGNNSNNNNNHNNNHNNNHHNGSINSNSNTNNNNNNNNGNN) is disordered. A RanBP2-type 2 zinc finger spans residues 581 to 610 (RAGDWKCSTCTYHNFAKNVVCLRCGGPKSI). Positions 622 to 649 (DSSTFGPASRTPSNNNISVNTNGGSNAG) are enriched in polar residues. The segment at 622-661 (DSSTFGPASRTPSNNNISVNTNGGSNAGRTDGNDNKGRDI) is disordered. Ser630 carries the post-translational modification Phosphoserine. The span at 652–661 (DGNDNKGRDI) shows a compositional bias: basic and acidic residues.

Its subcellular location is the chromosome. The protein localises to the nucleus. Its function is as follows. May play a role in chromatin organization. In Saccharomyces cerevisiae (strain ATCC 204508 / S288c) (Baker's yeast), this protein is Putative RNA-binding protein involved in heterochromatin assembly.